The primary structure comprises 345 residues: Fibronectin type 3 and ankyrin repeat domains protein 1 (345 aa).

Positions 8-108 (PPSKPHPPVV…LVSVSTTREP (101 aa)) constitute a Fibronectin type-III domain. 6 ANK repeats span residues 109-139 (ISSEHLHRAVSVNDEDLLVRILQGGRVKVDV), 143-172 (FGFTALMVAAQKGYTRLVKILVSNGTDVNL), 176-205 (SGKDSLMLACYAGHLDVVKYLRRHGASWQA), 209-238 (GGCTALHWAADGGHCSVIEWMIKDGCEVDV), 243-273 (SGWTPLMRVSAVSGNQRVASLLIDAGANVNV), and 277-306 (NGKTPLMVAVLNNHEELVQLLLDKGADASV).

In terms of assembly, interacts with COPS5; regulates the phosphorylation of JUN and the transcriptional activity of AP-1. Interacts with RYBP; may prevent the ubiquitin-mediated proteasomal degradation of FANK1. In terms of processing, polyubiquitinated. Polyubiquitination leads to proteasomal degradation. In terms of tissue distribution, mostly restricted to testis.

It localises to the nucleus. The protein localises to the cytoplasm. The protein resides in the cytosol. Its subcellular location is the cytoskeleton. It is found in the cilium basal body. It localises to the cell projection. The protein localises to the cilium. Through the activation of JUN and AP-1-mediated transcription, may regulate apoptosis. The sequence is that of Fibronectin type 3 and ankyrin repeat domains protein 1 from Homo sapiens (Human).